A 792-amino-acid polypeptide reads, in one-letter code: X-ray radiation resistance-associated protein 1 (792 aa).

LRR repeat units lie at residues 104–125, 141–155, 164–184, 188–209, 229–250, and 254–275; these read DLCT…IYIN, ALKE…IKTI, LLEF…CDLG, HLRV…LAVA, ALET…ASLA, and RLKK…QQVQ. 3 disordered regions span residues 490–517, 537–562, and 577–601; these read AEDL…SPSC, TLSH…KSTE, and IHKD…EVKG. The span at 549–560 shows a compositional bias: basic and acidic residues; the sequence is SPERPSDEDSKS. A coiled-coil region spans residues 723–745; the sequence is HKQYLEAKRLLKEFQARYRQLVS.

In terms of tissue distribution, expressed predominantly in testis followed by prostate and ovary. Low levels found in other tissues including peripheral blood leukocytes, spleen, thymus, small intestine and colon. Also expressed in neuroblastoma, glioma, breast, lung, leukemia, renal, ovarian, prostate and colorectal cancer cell lines.

It localises to the cytoplasm. The protein resides in the nucleus. In terms of biological role, may be involved in the response of cells to X-ray radiation. This chain is X-ray radiation resistance-associated protein 1, found in Homo sapiens (Human).